The following is an 822-amino-acid chain: Endonuclease MutS2 (822 aa).

Residue 348 to 355 (GPNTGGKT) participates in ATP binding. Positions 707–737 (SLNGKKVEPPPKSEPVPKKVKAEPPATEAKS) are disordered. Residues 709–728 (NGKKVEPPPKSEPVPKKVKA) are compositionally biased toward basic and acidic residues. The Smr domain maps to 749–822 (LDCRGDRLER…GAGVTIAYLR (74 aa)).

This sequence belongs to the DNA mismatch repair MutS family. MutS2 subfamily. In terms of assembly, homodimer. Binds to stalled ribosomes, contacting rRNA.

Its function is as follows. Endonuclease that is involved in the suppression of homologous recombination and thus may have a key role in the control of bacterial genetic diversity. In terms of biological role, acts as a ribosome collision sensor, splitting the ribosome into its 2 subunits. Detects stalled/collided 70S ribosomes which it binds and splits by an ATP-hydrolysis driven conformational change. Acts upstream of the ribosome quality control system (RQC), a ribosome-associated complex that mediates the extraction of incompletely synthesized nascent chains from stalled ribosomes and their subsequent degradation. Probably generates substrates for RQC. This is Endonuclease MutS2 from Synechocystis sp. (strain ATCC 27184 / PCC 6803 / Kazusa).